Here is a 373-residue protein sequence, read N- to C-terminus: Queuine tRNA-ribosyltransferase (373 aa).

The active-site Proton acceptor is the Asp-91. Residues 91 to 95, Asp-145, and Gln-187 contribute to the substrate site; that span reads DSGGF. The RNA binding stretch occupies residues 245-251; the sequence is GVGTPED. Catalysis depends on Asp-264, which acts as the Nucleophile. Residues 269–273 are RNA binding; important for wobble base 34 recognition; that stretch reads TRNAR. The Zn(2+) site is built by Cys-302, Cys-304, Cys-307, and His-333.

This sequence belongs to the queuine tRNA-ribosyltransferase family. In terms of assembly, homodimer. Within each dimer, one monomer is responsible for RNA recognition and catalysis, while the other monomer binds to the replacement base PreQ1. Zn(2+) is required as a cofactor.

It catalyses the reaction 7-aminomethyl-7-carbaguanine + guanosine(34) in tRNA = 7-aminomethyl-7-carbaguanosine(34) in tRNA + guanine. The protein operates within tRNA modification; tRNA-queuosine biosynthesis. Catalyzes the base-exchange of a guanine (G) residue with the queuine precursor 7-aminomethyl-7-deazaguanine (PreQ1) at position 34 (anticodon wobble position) in tRNAs with GU(N) anticodons (tRNA-Asp, -Asn, -His and -Tyr). Catalysis occurs through a double-displacement mechanism. The nucleophile active site attacks the C1' of nucleotide 34 to detach the guanine base from the RNA, forming a covalent enzyme-RNA intermediate. The proton acceptor active site deprotonates the incoming PreQ1, allowing a nucleophilic attack on the C1' of the ribose to form the product. After dissociation, two additional enzymatic reactions on the tRNA convert PreQ1 to queuine (Q), resulting in the hypermodified nucleoside queuosine (7-(((4,5-cis-dihydroxy-2-cyclopenten-1-yl)amino)methyl)-7-deazaguanosine). This chain is Queuine tRNA-ribosyltransferase, found in Syntrophobacter fumaroxidans (strain DSM 10017 / MPOB).